We begin with the raw amino-acid sequence, 536 residues long: Phosphoenolpyruvate carboxykinase (ATP) (536 aa).

Residues R61, Y195, and K201 each coordinate substrate. ATP-binding positions include K201, H220, and 236-244 (GLSGTGKTT). Mn(2+)-binding residues include K201 and H220. Mn(2+) is bound at residue D257. Residues E285, R322, and T447 each coordinate ATP. R322 contacts substrate.

Belongs to the phosphoenolpyruvate carboxykinase (ATP) family. Mn(2+) serves as cofactor.

It localises to the cytoplasm. The catalysed reaction is oxaloacetate + ATP = phosphoenolpyruvate + ADP + CO2. It functions in the pathway carbohydrate biosynthesis; gluconeogenesis. Involved in the gluconeogenesis. Catalyzes the conversion of oxaloacetate (OAA) to phosphoenolpyruvate (PEP) through direct phosphoryl transfer between the nucleoside triphosphate and OAA. The protein is Phosphoenolpyruvate carboxykinase (ATP) of Mesorhizobium japonicum (strain LMG 29417 / CECT 9101 / MAFF 303099) (Mesorhizobium loti (strain MAFF 303099)).